Consider the following 484-residue polypeptide: Protein nucleotidyltransferase YdiU (484 aa).

ATP contacts are provided by G81, G83, R84, K103, D115, G116, R166, and R173. Residue D244 is the Proton acceptor of the active site. Positions 245 and 254 each coordinate Mg(2+). D254 provides a ligand contact to ATP.

This sequence belongs to the SELO family. Requires Mg(2+) as cofactor. Mn(2+) is required as a cofactor.

The catalysed reaction is L-seryl-[protein] + ATP = 3-O-(5'-adenylyl)-L-seryl-[protein] + diphosphate. It catalyses the reaction L-threonyl-[protein] + ATP = 3-O-(5'-adenylyl)-L-threonyl-[protein] + diphosphate. The enzyme catalyses L-tyrosyl-[protein] + ATP = O-(5'-adenylyl)-L-tyrosyl-[protein] + diphosphate. It carries out the reaction L-histidyl-[protein] + UTP = N(tele)-(5'-uridylyl)-L-histidyl-[protein] + diphosphate. The catalysed reaction is L-seryl-[protein] + UTP = O-(5'-uridylyl)-L-seryl-[protein] + diphosphate. It catalyses the reaction L-tyrosyl-[protein] + UTP = O-(5'-uridylyl)-L-tyrosyl-[protein] + diphosphate. In terms of biological role, nucleotidyltransferase involved in the post-translational modification of proteins. It can catalyze the addition of adenosine monophosphate (AMP) or uridine monophosphate (UMP) to a protein, resulting in modifications known as AMPylation and UMPylation. This is Protein nucleotidyltransferase YdiU from Shewanella loihica (strain ATCC BAA-1088 / PV-4).